Here is a 384-residue protein sequence, read N- to C-terminus: Thylakoid membrane protein TERC, chloroplastic (384 aa).

The N-terminal 48 residues, 1–48 (MSLASVIHHGILPPAKSDRIFLTIPVFPPDFRARGWTKSPFSLLINPS), are a transit peptide targeting the chloroplast. Residues 49–115 (LASAANRRLS…DYQQEETYKT (67 aa)) lie on the Stromal side of the membrane. A disordered region spans residues 68 to 104 (GIDQEDEEKESRELLPHKNDENATTSRSSSSVDSGGL). Over residues 76–88 (KESRELLPHKNDE) the composition is skewed to basic and acidic residues. A helical transmembrane segment spans residues 116–136 (SFKTVALCVGTAVAFGIGIGL). Residues 137–145 (KEGVGKASE) lie on the Lumenal, thylakoid side of the membrane. The helical transmembrane segment at 146 to 166 (FFAGYILEQSLSVDNLFVFVL) threads the bilayer. Residues 167-180 (VFKYFKVPLMYQNK) lie on the Stromal side of the membrane. Residues 181–201 (VLTYGIAGAIVFRFTLILLGT) form a helical membrane-spanning segment. The Lumenal, thylakoid portion of the chain corresponds to 202–206 (ATLQK). The helical transmembrane segment at 207–227 (FEAVNLLLAAVLLYSSFKLFA) threads the bilayer. Residues 228-275 (SEEDDTDLSDNFIVKTCQRFIPVTSSYDGNRFFTKHDGILKATPLLLT) lie on the Stromal side of the membrane. A helical transmembrane segment spans residues 276-296 (VAVIELSDIAFAVDSIPAVFG). At 297 to 301 (VTRDP) the chain is on the lumenal, thylakoid side. Residues 302-322 (FIVLTSNLFAILGLRSLYTLI) traverse the membrane as a helical segment. Residues 323–335 (SEGMDELEYLQPS) lie on the Stromal side of the membrane. Residues 336 to 356 (IAVVLGFIGVKMILDFFGFHI) traverse the membrane as a helical segment. Ser-357 is a topological domain (lumenal, thylakoid). Residues 358–378 (TEASLGVVALSLSTGVLLSLT) form a helical membrane-spanning segment. The Stromal segment spans residues 379-384 (NKSSDS).

Interacts with ALB3. Expressed in roots, rosette and cauline leaves, stems and flowers.

The protein resides in the plastid. The protein localises to the chloroplast thylakoid membrane. Functionally, integral thylakoid membrane protein that plays a crucial role in thylakoid membrane biogenesis and thylakoid formation in early chloroplast development. Is essential for de novo synthesis of photosystem II (PSII) core proteins and required for efficient insertion of thylakoid membrane proteins, presumably via interaction with ALB3. May assist synthesis of thylakoid membrane proteins at the membrane insertion step. This chain is Thylakoid membrane protein TERC, chloroplastic, found in Arabidopsis thaliana (Mouse-ear cress).